A 295-amino-acid polypeptide reads, in one-letter code: 3-methyl-2-oxobutanoate hydroxymethyltransferase (295 aa).

Positions 53 and 92 each coordinate Mg(2+). 3-methyl-2-oxobutanoate is bound by residues aspartate 53–serine 54, aspartate 92, and lysine 122. Glutamate 124 lines the Mg(2+) pocket. Glutamate 191 (proton acceptor) is an active-site residue.

This sequence belongs to the PanB family. In terms of assembly, homodecamer; pentamer of dimers. The cofactor is Mg(2+).

It is found in the cytoplasm. It carries out the reaction 3-methyl-2-oxobutanoate + (6R)-5,10-methylene-5,6,7,8-tetrahydrofolate + H2O = 2-dehydropantoate + (6S)-5,6,7,8-tetrahydrofolate. It participates in cofactor biosynthesis; (R)-pantothenate biosynthesis; (R)-pantoate from 3-methyl-2-oxobutanoate: step 1/2. Catalyzes the reversible reaction in which hydroxymethyl group from 5,10-methylenetetrahydrofolate is transferred onto alpha-ketoisovalerate to form ketopantoate. In Koribacter versatilis (strain Ellin345), this protein is 3-methyl-2-oxobutanoate hydroxymethyltransferase.